The chain runs to 228 residues: Max-interacting protein 1 (228 aa).

Disordered regions lie at residues 29 to 76 and 162 to 228; these read GYAS…NELE and GSTI…SFTS. The span at 43-56 shows a compositional bias: basic residues; sequence QHSKPPRRLSRAQK. Residues 57–70 show a composition bias toward polar residues; that stretch reads HSSGSSNTSTANRS. A bHLH domain is found at 67–119; the sequence is ANRSTHNELEKNRRAHLRLCLERLKVLIPLGPDCTRHTTLGLLNKAKAHIKKL. Acidic residues predominate over residues 173 to 183; that stretch reads EREEIEVDVES. Over residues 216–228 the composition is skewed to polar residues; the sequence is GYSSASVKLSFTS.

Efficient DNA binding requires dimerization with another bHLH protein. Binds DNA as a heterodimer with MAX. Interacts with SMC3. Interacts with RNF17.

It is found in the nucleus. Functionally, transcriptional repressor. MXI1 binds with MAX to form a sequence-specific DNA-binding protein complex which recognizes the core sequence 5'-CAC[GA]TG-3'. MXI1 thus antagonizes MYC transcriptional activity by competing for MAX. This is Max-interacting protein 1 (Mxi1) from Rattus norvegicus (Rat).